The chain runs to 42 residues: Snaclec lebecetin subunit alpha (42 aa).

The C-type lectin domain maps to 1–42 (DQDCLPGWSSHEGHCYKVFNLDKTWEDAEKFCTEQPSNGHLV). The cysteines at positions 4 and 15 are disulfide-linked.

As to quaternary structure, heterodimer of subunits alpha and beta; disulfide-linked. Requires Ca(2+) as cofactor. Glycosylated. As to expression, expressed by the venom gland.

It localises to the secreted. Its function is as follows. Binds to the platelet GPIb/IX/V receptor system and inhibits ristocetin-induced platelet aggregation in human platelet-rich plasma. Strongly inhibits platelet aggregation induced by ADP, calcium ionophore, thrombin and collagen. Does not inhibit U46619-induced platelet aggregation. This is Snaclec lebecetin subunit alpha from Macrovipera lebetinus (Levantine viper).